An 88-amino-acid chain; its full sequence is UPF0335 protein WD_0557 (88 aa).

Belongs to the UPF0335 family.

This is UPF0335 protein WD_0557 from Wolbachia pipientis wMel.